The primary structure comprises 259 residues: Deoxyribose-phosphate aldolase (259 aa).

Residue Asp-102 is the Proton donor/acceptor of the active site. Lys-167 acts as the Schiff-base intermediate with acetaldehyde in catalysis. Residue Lys-201 is the Proton donor/acceptor of the active site.

Belongs to the DeoC/FbaB aldolase family. DeoC type 2 subfamily.

The protein localises to the cytoplasm. It carries out the reaction 2-deoxy-D-ribose 5-phosphate = D-glyceraldehyde 3-phosphate + acetaldehyde. The protein operates within carbohydrate degradation; 2-deoxy-D-ribose 1-phosphate degradation; D-glyceraldehyde 3-phosphate and acetaldehyde from 2-deoxy-alpha-D-ribose 1-phosphate: step 2/2. In terms of biological role, catalyzes a reversible aldol reaction between acetaldehyde and D-glyceraldehyde 3-phosphate to generate 2-deoxy-D-ribose 5-phosphate. This is Deoxyribose-phosphate aldolase from Erwinia tasmaniensis (strain DSM 17950 / CFBP 7177 / CIP 109463 / NCPPB 4357 / Et1/99).